The sequence spans 371 residues: Signal peptide peptidase-like 1 (371 aa).

Residues 1–6 lie on the Lumenal side of the membrane; sequence MESLWK. The helical transmembrane segment at 7–27 threads the bilayer; sequence LSYLLEPASLALILTAVSVAY. The Cytoplasmic portion of the chain corresponds to 28–57; that stretch reads ASASRALDHGREMERNLDFSEASITLDRSQ. Residues 58-75 traverse the membrane as a helical segment; the sequence is ALMIPLASSCSLLLMFYL. Over 76-80 the chain is Lumenal; sequence FSSVS. A helical membrane pass occupies residues 81–103; that stretch reads HLVTAFTAVASAMALFFCLSPYV. Topologically, residues 104 to 123 are cytoplasmic; it reads NCVRSRLGVGDPFVSRCCSK. A helical membrane pass occupies residues 124–146; the sequence is PFTRLQGLLVAICVGTVVAWLVS. Residues 147-149 lie on the Lumenal side of the membrane; sequence GHW. Residues 150–167 form a helical membrane-spanning segment; that stretch reads LLNNLLGISICIAFVSHV. Topologically, residues 168–171 are cytoplasmic; that stretch reads RLPN. Residues 172–192 form a helical membrane-spanning segment; the sequence is IKICALLLVCLFVYDVFWVFF. Asp-186 is an active-site residue. Residues 193-258 are Lumenal-facing; it reads SERFFGANVM…LAPGSSPGDY (66 aa). A helical transmembrane segment spans residues 259 to 279; sequence MMLGLGDMAIPGMLLALVLSF. Residue Asp-265 is part of the active site. Over 280-301 the chain is Cytoplasmic; sequence DHRKIKDMSVSQDMPPSKQRKY. The chain crosses the membrane as a helical span at residues 302–322; the sequence is VWYALTGYGVGLVTALAAGIL. Residues 323–326 are Lumenal-facing; it reads SQSP. The helical transmembrane segment at 327-347 threads the bilayer; that stretch reads QPALLYLVPSTLGPVMYMSWL. Residues 328–330 carry the PAL motif; that stretch reads PAL. Over 348-371 the chain is Cytoplasmic; that stretch reads RNELWELWEGSRPIINDKAHLLEV.

This sequence belongs to the peptidase A22B family.

The protein localises to the endosome membrane. Functionally, intramembrane-cleaving aspartic protease (I-CLiP) that cleaves type II membrane signal peptides in the hydrophobic plane of the membrane. This is Signal peptide peptidase-like 1 (SPPL1) from Oryza sativa subsp. japonica (Rice).